The following is a 561-amino-acid chain: MPESKYRQQTIRAPRGTVLTAKSWLTEAPLRMLMNNLDPDVAENPHELVVYGGIGRAARNWECYDAIVDALTRLEADETLLIQSGKPVGVFKTHDNAPRVLIANSNLVPHWATWEHFNELDAKGLAMYGQMTAGSWIYIGSQGIVQGTYETFVEAGRQHYNGTLAGRWVLTAGLGGMGGAQPLAATLAGACSLTIECQQSRIDFRLRTRYVDEQAATLDDALARITRYTREGKAVSVALCANAADILPELVNRGVRPDLVTDQTSAHDPLHGYLPSGWRWEEYQKNAQSDPHGTMQAAKRSMAAHVRAMLAFSKMGVPTFDYGNNIRQMAKEMGVENAFDFPGFVPAYIRPLFCRGIGPFRWVALSGDPQDIYKTDAKVKEIVAEDKHLHHWLDMARERIHFQGLPARICWVGLEWRQKLGLAFNEMVRCGEVSAPIVIGRDHLDSGSVASPNRETEAMRDGSDAVSDWPLLNALLNTASGATWVSLHHGGGVGMGFSQHAGMVIVCDGTDEAAARIRRVLHNDPATGVMRHADAGYDLAVECAVEQGLNLPMVAATQGKG.

Residues 52-53, glutamine 130, 176-178, glutamate 196, arginine 201, 242-243, 263-267, 273-274, and tyrosine 322 each bind NAD(+); these read GG, GMG, NA, QTSAH, and YL. Cysteine 410 is an active-site residue. Glycine 492 serves as a coordination point for NAD(+).

It belongs to the urocanase family. NAD(+) serves as cofactor.

It localises to the cytoplasm. The enzyme catalyses 4-imidazolone-5-propanoate = trans-urocanate + H2O. Its pathway is amino-acid degradation; L-histidine degradation into L-glutamate; N-formimidoyl-L-glutamate from L-histidine: step 2/3. Functionally, catalyzes the conversion of urocanate to 4-imidazolone-5-propionate. The polypeptide is Urocanate hydratase (Salmonella choleraesuis (strain SC-B67)).